Reading from the N-terminus, the 223-residue chain is Probable iron-sulfur cluster repair protein HI_1677 (223 aa).

Belongs to the RIC family.

The protein localises to the cytoplasm. Its function is as follows. Di-iron-containing protein involved in the repair of iron-sulfur clusters. This chain is Probable iron-sulfur cluster repair protein HI_1677, found in Haemophilus influenzae (strain ATCC 51907 / DSM 11121 / KW20 / Rd).